A 211-amino-acid chain; its full sequence is Thymidylate kinase (211 aa).

11–18 is a binding site for ATP; that stretch reads GPDGAGKT.

Belongs to the thymidylate kinase family.

The enzyme catalyses dTMP + ATP = dTDP + ADP. Functionally, phosphorylation of dTMP to form dTDP in both de novo and salvage pathways of dTTP synthesis. The protein is Thymidylate kinase of Streptococcus uberis (strain ATCC BAA-854 / 0140J).